The following is an 867-amino-acid chain: Bifunctional cis-abienol synthase, chloroplastic (867 aa).

Residues 1–49 (MALPVYSLKSHIPITTIASAKMNYTPNKGMITANGRSRRIRLSPNKIVA) constitute a chloroplast transit peptide. Residue Lys270 participates in substrate binding. A DXDD motif motif is present at residues 403-406 (DIDD). Substrate is bound at residue Lys490. Asp622, Asp626, Asn763, Asp764, Thr767, and Glu771 together coordinate Mg(2+). The short motif at 622 to 626 (DDLYD) is the DDXXD motif element.

This sequence belongs to the terpene synthase family. Tpsd subfamily. Mg(2+) serves as cofactor.

The protein resides in the plastid. It localises to the chloroplast. The catalysed reaction is 8-hydroxycopalyl diphosphate = cis-abienol + diphosphate. It carries out the reaction (2E,6E,10E)-geranylgeranyl diphosphate + H2O = 8-hydroxycopalyl diphosphate. It functions in the pathway terpene metabolism; oleoresin biosynthesis. Its function is as follows. Involved in the biosynthesis of cis-abienol, a labdane diterpene that can be used as synthesis precursor of ambergris substitution fragance products. Bifunctional class I/II enzyme in which both the bicyclization and water capture occur in the class II active site, resulting in an intermediary labda-13-en-8-ol diphosphate, which undergoes cleavage of the diphosphate group and final deprotonation at the class I active site. No activity with copalyl diphosphate as substrate. The polypeptide is Bifunctional cis-abienol synthase, chloroplastic (CAS) (Abies balsamea (Balsam fir)).